A 384-amino-acid polypeptide reads, in one-letter code: Histone acetyltransferase type B subunit 2 (384 aa).

WD repeat units follow at residues 156 to 196 (GHSA…SSIS), 203 to 243 (RHET…CIHA), 247 to 287 (AHTS…QPLH), 291 to 331 (GHSK…AEVP), and 348 to 384 (GHTS…PQPE).

This sequence belongs to the WD repeat RBAP46/RBAP48/MSI1 family. As to quaternary structure, component of the HAT-B complex.

It is found in the cytoplasm. It localises to the nucleus. Its function is as follows. Regulatory subunit of the histone acetylase B (HAT-B) complex. The complex acetylates histone H4 which is required for telomeric silencing. This Encephalitozoon cuniculi (strain GB-M1) (Microsporidian parasite) protein is Histone acetyltransferase type B subunit 2 (HAT2).